Reading from the N-terminus, the 216-residue chain is Heart- and neural crest derivatives-expressed protein 1 (216 aa).

Disordered regions lie at residues 1–20 (MNLV…HPPH), 53–109 (APDF…RTES), and 165–203 (ELKK…KGRT). Positions 8 to 18 (AHHHHHHHSHP) are enriched in basic residues. Over residues 65–78 (TAVAAAAYGPDARP) the composition is skewed to low complexity. The span at 92–104 (LPKRKGSGPKKER) shows a compositional bias: basic residues. In terms of domain architecture, bHLH spans 94-146 (KRKGSGPKKERRRTESINSAFAELRECIPNVPADTKLSKIKTLRLATSYIAYL). Residue threonine 107 is modified to Phosphothreonine; by PLK4. Phosphoserine; by PLK4 is present on serine 109. The segment covering 165–174 (ELKKTDGGRE) has biased composition (basic and acidic residues).

Efficient DNA binding requires dimerization with another bHLH protein. Forms homodimers and heterodimers with TCF3 gene products E12 and E47, HAND2 and HEY1, HEY2 and HEYL (hairy-related transcription factors). Interacts with MDFIC. Interacts with SOX15; the interaction enhances HAND1-induced differentiation of trophoblast giant cells. Post-translationally, phosphorylation by PLK4 disrupts the interaction with MDFIC and leads to translocation into the nucleoplasm, allowing dimerization and transcription factor activity. Smooth muscle cells of the gut and adrenal tissue.

Its subcellular location is the nucleus. It is found in the nucleoplasm. It localises to the nucleolus. Its function is as follows. Transcription factor that plays an essential role in both trophoblast giant cell differentiation and in cardiac morphogenesis. Binds the DNA sequence 5'-NRTCTG-3' (non-canonical E-box). Acts as a transcriptional repressor of SOX15. In the adult, could be required for ongoing expression of cardiac-specific genes. This chain is Heart- and neural crest derivatives-expressed protein 1 (Hand1), found in Mus musculus (Mouse).